The following is a 369-amino-acid chain: Glutamate 5-kinase (369 aa).

An ATP-binding site is contributed by Lys9. 3 residues coordinate substrate: Ser49, Asp136, and Asn148. Residues 168–169 and 210–216 each bind ATP; these read TD and TGGMLTK. The region spanning 275–355 is the PUA domain; it reads QGSIWVDKGA…KGVLIYRDDW (81 aa).

Belongs to the glutamate 5-kinase family.

The protein localises to the cytoplasm. It carries out the reaction L-glutamate + ATP = L-glutamyl 5-phosphate + ADP. The protein operates within amino-acid biosynthesis; L-proline biosynthesis; L-glutamate 5-semialdehyde from L-glutamate: step 1/2. Catalyzes the transfer of a phosphate group to glutamate to form L-glutamate 5-phosphate. This is Glutamate 5-kinase from Streptococcus pneumoniae (strain 70585).